A 163-amino-acid polypeptide reads, in one-letter code: Endoribonuclease YbeY (163 aa).

His-121, His-125, and His-131 together coordinate Zn(2+).

The protein belongs to the endoribonuclease YbeY family. The cofactor is Zn(2+).

The protein resides in the cytoplasm. In terms of biological role, single strand-specific metallo-endoribonuclease involved in late-stage 70S ribosome quality control and in maturation of the 3' terminus of the 16S rRNA. The sequence is that of Endoribonuclease YbeY from Synechococcus sp. (strain JA-3-3Ab) (Cyanobacteria bacterium Yellowstone A-Prime).